A 360-amino-acid chain; its full sequence is Peptide chain release factor 1 (360 aa).

Residue Q237 is modified to N5-methylglutamine.

It belongs to the prokaryotic/mitochondrial release factor family. Post-translationally, methylated by PrmC. Methylation increases the termination efficiency of RF1.

Its subcellular location is the cytoplasm. Peptide chain release factor 1 directs the termination of translation in response to the peptide chain termination codons UAG and UAA. This chain is Peptide chain release factor 1, found in Pseudomonas aeruginosa (strain LESB58).